The primary structure comprises 532 residues: MIPDCIPLAEVPHTTRLFADYLAHSAKLQAFYPALKYNQNLAAYTSSIQYQPGTRDRVATALQILNERLGASPEALANIERLRRGAYAVVSGQQVGLFGGPLLAVLKAAHAVRLARDLTAQGTDTIPVFWMASEDHDLAEVDHVFLPKNDFSLQRFTADATGTTGAPMSDLRFEPTIENLVQQTSELLGDSSLVDILRESYRPGETVAGAFGKLFARLFAKHGLVLLDPADTELHRIAAPLFRRAVAEAAEIARALVDRGKELEHAGYHEQVKVSASSVLLFGIQDGARVAIQRQNDHFSVGKEKLTQEELLARIDAEPEKFNANVLLRPVMQDTLLPTLAYIGGPAEVAYFAQGSVVYERLLGRATPILPRFSATLIEPKVEKLLEKYDLKFEDINHGADALAEKLAQKTLPPELDEQFRVALATVTQTMAQAKDALAKVDASLVEAAERATSKMRYQVGRLHRRAARAALRRTHVLSQHADLIVNALYPEKELQERTVGAAYFLAKYGLDLVDTLVDAAGTCPEHRVIRV.

Residues 431–451 (MAQAKDALAKVDASLVEAAER) are a coiled coil.

It belongs to the BshC family.

This is Putative cysteine ligase BshC from Koribacter versatilis (strain Ellin345).